The sequence spans 111 residues: Macrodomain Ori protein (111 aa).

The protein belongs to the MaoP family.

Its function is as follows. Involved in the organization of the Ori region of the chromosome into a macrodomain (MD). It constrains DNA mobility in the Ori macrodomain and limits long-distance DNA interactions with other chromosomal regions. The sequence is that of Macrodomain Ori protein from Haemophilus influenzae (strain ATCC 51907 / DSM 11121 / KW20 / Rd).